Here is an 816-residue protein sequence, read N- to C-terminus: Lon protease (816 aa).

In terms of domain architecture, Lon N-terminal spans 40-244 (VPLIAVPSHP…KVLELLYEEL (205 aa)). Residue 398 to 405 (GPPGVGKT) participates in ATP binding. The Lon proteolytic domain occupies 636–816 (AMSPGMVMGL…SMKEVIKLLF (181 aa)). Catalysis depends on residues Ser724 and Lys767.

It belongs to the peptidase S16 family. As to quaternary structure, homohexamer. Organized in a ring with a central cavity.

It localises to the cytoplasm. The enzyme catalyses Hydrolysis of proteins in presence of ATP.. ATP-dependent serine protease that mediates the selective degradation of mutant and abnormal proteins as well as certain short-lived regulatory proteins. Required for cellular homeostasis and for survival from DNA damage and developmental changes induced by stress. Degrades polypeptides processively to yield small peptide fragments that are 5 to 10 amino acids long. Binds to DNA in a double-stranded, site-specific manner. The polypeptide is Lon protease (Borrelia duttonii (strain Ly)).